The primary structure comprises 65 residues: Defensin Cg-Defm (65 aa).

The signal sequence occupies residues M1–A22. 3 residues coordinate beta-D-GlcNAc-(1-&gt;4)-Mur2Ac(oyl-L-Ala-gamma-D-Glu-L-Lys-D-Ala-D-Ala)-di-trans,octa-cis-undecaprenyl diphosphate: F24, G25, and C26. 4 disulfide bridges follow: C26/C47, C33/C56, C37/C58, and C42/C61. The binds to membrane interface stretch occupies residues P27–Q30. H36 serves as a coordination point for beta-D-GlcNAc-(1-&gt;4)-Mur2Ac(oyl-L-Ala-gamma-D-Glu-L-Lys-D-Ala-D-Ala)-di-trans,octa-cis-undecaprenyl diphosphate. Positions D48–L54 are binds to membrane interface. C56 contributes to the beta-D-GlcNAc-(1-&gt;4)-Mur2Ac(oyl-L-Ala-gamma-D-Glu-L-Lys-D-Ala-D-Ala)-di-trans,octa-cis-undecaprenyl diphosphate binding site.

The protein belongs to the invertebrate defensin family. In terms of tissue distribution, expressed in the mantle. Low or no expression in most of the organs analyzed, including hemocytes, heart, digestive gland, and gills.

The protein resides in the secreted. It localises to the target cell membrane. Antibacterial peptide mostly active against Gram-positive bacteria (M.lysodeikticus, S.aureus, and the marine bacteria, B.stationis, and M.maritypicum). It acts by selectively inhibiting peptidoglycan biosynthesis through complex formation with the cell wall precursor lipid II (1:1 molar ratio) thus inhibiting cell wall synthesis. It does not disrupt cell membranes. Is noticeably more potent than Cg-Defh1. It shows no or limited activities against Gram-negative bacteria and filamentous fungi. The sequence is that of Defensin Cg-Defm from Magallana gigas (Pacific oyster).